A 659-amino-acid polypeptide reads, in one-letter code: Cytochrome bo(3) ubiquinol oxidase subunit 1 (659 aa).

The Extracellular segment spans residues 1 to 14 (MFGKLSLNSIPYHD). The helical transmembrane segment at 15-35 (PIIMITCCVVILVFLVISIII) threads the bilayer. Over 36–56 (TIAQKWQYLWNEWCCTVDHKK) the chain is Cytoplasmic. A helical membrane pass occupies residues 57–77 (IAKMYIFLAFIMLFRGFADAI). The a ubiquinone site is built by Arg71, Asp75, and His101. Residues 78–109 (MMRMQQFLVSSYHGNGTGFLPPHHYDQIFTAH) are Extracellular-facing. His109 contacts heme b. The chain crosses the membrane as a helical span at residues 110-130 (GVIMIFFVAMPLVIGLMNFVV). Topologically, residues 131-148 (PLQIGSRDVAFPFLNNLS) are cytoplasmic. Residues 149 to 169 (LWLTIFSALLMNVSLGIGEFA) form a helical membrane-spanning segment. Over 170-192 (QTGWLAYPPLSELQYSPGVGVDY) the chain is Extracellular. Residue Trp173 coordinates heme b. Residues 193–213 (WIWSLQISGIGTTLTAINFLV) form a helical membrane-spanning segment. Over 214 to 235 (TIIKMRSSGMNWFKIPVFTWTS) the chain is Cytoplasmic. A helical transmembrane segment spans residues 236-256 (FCTNILIIASFPVLTVSLLLL). Over 257–280 (TLDRYLGFHFFTNDFGGNMMMYVN) the chain is Extracellular. A helical membrane pass occupies residues 281-301 (LIWIWGHPEVYILILPVFGIF). Cu(2+) is bound at residue His287. Residues 287–291 (HPEVY) constitute a cross-link (1'-histidyl-3'-tyrosine (His-Tyr)). Tyr291 lines the Fe(II)-heme o pocket. At 302–318 (SEVVATFSSKELFGYTS) the chain is on the cytoplasmic side. Residues 319–339 (LIWATIVITILSFIVWLHHFF) form a helical membrane-spanning segment. Cu(2+)-binding residues include His336 and His337. The Extracellular segment spans residues 340 to 350 (TMGASANVNAF). A helical transmembrane segment spans residues 351–371 (FGITTMIISIPTGVKIFNWLF). At 372–382 (TMYRGNVRINS) the chain is on the cytoplasmic side. Residues 383 to 403 (IMLWTIGFLITFSIGGMAGVL) form a helical membrane-spanning segment. Over 404 to 416 (LSLPVIDFSLHNS) the chain is Extracellular. The Fe(II)-heme o site is built by His414 and His422. Residues 417-437 (LFLVAHFHNVIIGGVVFGCFA) form a helical membrane-spanning segment. Residue His424 coordinates heme b. Residues 438–459 (GITYWFPKLFGFMLSEKWGKRA) are Cytoplasmic-facing. A helical transmembrane segment spans residues 460 to 480 (FWCWFFGFFCAFMPLYALGLM). The Extracellular segment spans residues 481–499 (GMTRRLSQNINPQFHSMLT). Residues Arg484 and Arg485 each contribute to the heme b site. The chain crosses the membrane as a helical span at residues 500 to 520 (IAALGTILIFIGIVFQIIQIF). Residues 521–587 (VSIRDRNLNR…KLPILYTSFH (67 aa)) lie on the Cytoplasmic side of the membrane. Residues 588–608 (MPKNTKFGFLIGFFAFLLGFS) traverse the membrane as a helical segment. Residue Ala609 is a topological domain, extracellular. The helical transmembrane segment at 610–630 (VWYIFWLFFISFFVIIYLLVI) threads the bilayer. Over 631–659 (KSLDTNCDYIISIEEIKEIEKCINIKKMD) the chain is Cytoplasmic.

It belongs to the heme-copper respiratory oxidase family. As to quaternary structure, the cytochrome bo(3) ubiquinol oxidase complex is a heterooctamer of two A chains, two B chains, two C chains and two D chains. Requires Cu(2+) as cofactor. It depends on heme b as a cofactor. Fe(II)-heme o serves as cofactor.

It is found in the cell membrane. The catalysed reaction is 2 a ubiquinol + O2 + n H(+)(in) = 2 a ubiquinone + 2 H2O + n H(+)(out). Cytochrome bo(3) ubiquinol oxidase is the terminal enzyme in the aerobic respiratory chain. Catalyzes the four-electron reduction of O2 to water, using a ubiquinol as a membrane soluble electron donor for molecular oxygen reduction. Has proton pump activity across the membrane in addition to electron transfer, pumping 2 protons/electron and generating a proton motive force. All the redox centers of this enzyme complex are located within the largest subunit, subunit I. Protons are probably pumped via D- and K- channels found in this subunit. This chain is Cytochrome bo(3) ubiquinol oxidase subunit 1 (cyoB), found in Buchnera aphidicola subsp. Baizongia pistaciae (strain Bp).